The following is a 231-amino-acid chain: MTLDSYDKLLGTVLQEYKILTEYKRLQSEDLGGIYVIPSHENSFVWFGVLFVRSGPYKNGVFRFTLTLPDKFPNDSAVPTVVFQSETFHPLVCPYNGTLELSEAFAKWKSGENHLWQVLKFIQYVFAHFEEYMAVAELTANNVAHELFQQSRADFLQRVEECVRLSQAKVYDPAPVQDRNYIVFEQFDGAVHGPVLESMKQGRANEVGTTPPSSGLSWVKEGVFQPLSKQG.

A UBC core domain is found at 14–168 (LQEYKILTEY…VEECVRLSQA (155 aa)).

This sequence belongs to the ubiquitin-conjugating enzyme family. FTS subfamily.

The protein is Protein crossbronx homolog of Culex quinquefasciatus (Southern house mosquito).